The chain runs to 153 residues: Ribosome maturation factor RimP (153 aa).

It belongs to the RimP family.

It is found in the cytoplasm. Its function is as follows. Required for maturation of 30S ribosomal subunits. This is Ribosome maturation factor RimP from Picosynechococcus sp. (strain ATCC 27264 / PCC 7002 / PR-6) (Agmenellum quadruplicatum).